Consider the following 197-residue polypeptide: Recombination protein RecR (197 aa).

The C4-type zinc finger occupies Cys56–Cys71. Residues Arg79–Pro174 enclose the Toprim domain.

The protein belongs to the RecR family.

Functionally, may play a role in DNA repair. It seems to be involved in an RecBC-independent recombinational process of DNA repair. It may act with RecF and RecO. The protein is Recombination protein RecR of Myxococcus xanthus (strain DK1622).